The primary structure comprises 338 residues: Ketol-acid reductoisomerase (NADP(+)) (338 aa).

The 181-residue stretch at 1 to 181 (MHVYYDKDCD…GGGRTGIIET (181 aa)) folds into the KARI N-terminal Rossmann domain. NADP(+) is bound by residues 24 to 27 (YGSQ), Arg-47, Ser-50, Thr-52, and 82 to 85 (DEFQ). His-107 is a catalytic residue. An NADP(+)-binding site is contributed by Gly-133. The region spanning 182–327 (TFKDETETDL…AKLRAMMPWI (146 aa)) is the KARI C-terminal knotted domain. Residues Asp-190, Glu-194, Glu-226, and Glu-230 each coordinate Mg(2+). Ser-251 provides a ligand contact to substrate.

Belongs to the ketol-acid reductoisomerase family. Mg(2+) is required as a cofactor.

It carries out the reaction (2R)-2,3-dihydroxy-3-methylbutanoate + NADP(+) = (2S)-2-acetolactate + NADPH + H(+). The catalysed reaction is (2R,3R)-2,3-dihydroxy-3-methylpentanoate + NADP(+) = (S)-2-ethyl-2-hydroxy-3-oxobutanoate + NADPH + H(+). The protein operates within amino-acid biosynthesis; L-isoleucine biosynthesis; L-isoleucine from 2-oxobutanoate: step 2/4. It functions in the pathway amino-acid biosynthesis; L-valine biosynthesis; L-valine from pyruvate: step 2/4. Involved in the biosynthesis of branched-chain amino acids (BCAA). Catalyzes an alkyl-migration followed by a ketol-acid reduction of (S)-2-acetolactate (S2AL) to yield (R)-2,3-dihydroxy-isovalerate. In the isomerase reaction, S2AL is rearranged via a Mg-dependent methyl migration to produce 3-hydroxy-3-methyl-2-ketobutyrate (HMKB). In the reductase reaction, this 2-ketoacid undergoes a metal-dependent reduction by NADPH to yield (R)-2,3-dihydroxy-isovalerate. The protein is Ketol-acid reductoisomerase (NADP(+)) of Cellvibrio japonicus (strain Ueda107) (Pseudomonas fluorescens subsp. cellulosa).